A 286-amino-acid polypeptide reads, in one-letter code: Polyamine aminopropyltransferase (286 aa).

Residues 5–238 (TMWHETLHDQ…GIMTFAWATD (234 aa)) form the PABS domain. Q33 lines the S-methyl-5'-thioadenosine pocket. Positions 64 and 88 each coordinate spermidine. Residues E108 and 140 to 141 (DG) each bind S-methyl-5'-thioadenosine. Residue D158 is the Proton acceptor of the active site. Residue 158–161 (DCTD) coordinates spermidine. Residue P165 coordinates S-methyl-5'-thioadenosine.

This sequence belongs to the spermidine/spermine synthase family. Homodimer or homotetramer.

The protein resides in the cytoplasm. It carries out the reaction S-adenosyl 3-(methylsulfanyl)propylamine + putrescine = S-methyl-5'-thioadenosine + spermidine + H(+). The protein operates within amine and polyamine biosynthesis; spermidine biosynthesis; spermidine from putrescine: step 1/1. Functionally, catalyzes the irreversible transfer of a propylamine group from the amino donor S-adenosylmethioninamine (decarboxy-AdoMet) to putrescine (1,4-diaminobutane) to yield spermidine. The sequence is that of Polyamine aminopropyltransferase from Salmonella schwarzengrund (strain CVM19633).